The primary structure comprises 481 residues: tRNA:m(4)X modification enzyme TRM13 homolog (481 aa).

Residue alanine 2 is modified to N-acetylalanine. Residues 56–83 (RILCPLDPKHTVYEDQLAKHLKKCNSRE) form a CHHC U11-48K-type zinc finger. The Zn(2+) site is built by cysteine 59, histidine 65, histidine 75, and cysteine 79. Positions 113-140 (SLSEEQLEKLIKKLRKASEGLNSTLKDH) form a coiled coil. The disordered stretch occupies residues 381–408 (ETSNSTTKRQDNQNDDSEEHDDGGYRIT).

Belongs to the methyltransferase TRM13 family.

The enzyme catalyses cytidine(4) in tRNA(Pro) + S-adenosyl-L-methionine = 2'-O-methylcytidine(4) in tRNA(Pro) + S-adenosyl-L-homocysteine + H(+). The catalysed reaction is cytidine(4) in tRNA(Gly)(GCC) + S-adenosyl-L-methionine = 2'-O-methylcytidine(4) in tRNA(Gly)(GCC) + S-adenosyl-L-homocysteine + H(+). It carries out the reaction adenosine(4) in tRNA(His) + S-adenosyl-L-methionine = 2'-O-methyladenosine(4) in tRNA(His) + S-adenosyl-L-homocysteine + H(+). In terms of biological role, tRNA methylase which 2'-O-methylates cytidine(4) in tRNA(Pro) and tRNA(Gly)(GCC), and adenosine(4) in tRNA(His). This is tRNA:m(4)X modification enzyme TRM13 homolog (TRMT13) from Homo sapiens (Human).